The following is a 339-amino-acid chain: Anthranilate phosphoribosyltransferase (339 aa).

Residues Gly-80, 83-84, Thr-88, 90-93, 108-116, and Ser-120 each bind 5-phospho-alpha-D-ribose 1-diphosphate; these read GD, NIST, and KHGNRSVSS. Anthranilate is bound at residue Gly-80. Ser-92 is a Mg(2+) binding site. Asn-111 provides a ligand contact to anthranilate. Arg-166 is an anthranilate binding site. 2 residues coordinate Mg(2+): Asp-225 and Glu-226.

It belongs to the anthranilate phosphoribosyltransferase family. Homodimer. It depends on Mg(2+) as a cofactor.

It catalyses the reaction N-(5-phospho-beta-D-ribosyl)anthranilate + diphosphate = 5-phospho-alpha-D-ribose 1-diphosphate + anthranilate. It participates in amino-acid biosynthesis; L-tryptophan biosynthesis; L-tryptophan from chorismate: step 2/5. In terms of biological role, catalyzes the transfer of the phosphoribosyl group of 5-phosphorylribose-1-pyrophosphate (PRPP) to anthranilate to yield N-(5'-phosphoribosyl)-anthranilate (PRA). The sequence is that of Anthranilate phosphoribosyltransferase from Desulfosudis oleivorans (strain DSM 6200 / JCM 39069 / Hxd3) (Desulfococcus oleovorans).